A 121-amino-acid chain; its full sequence is Flagellar protein FliT (121 aa).

The required for homodimerization stretch occupies residues 1-50 (MNNAPHLYFAWQQLVEKSQLMLRLATEEQWDELIASEMAYVNAVQEIAHL). A fliD binding region spans residues 60–98 (MQEQLRPMLRLILDNESKVKQLLQIRMDELAKLVGQSSV).

The protein belongs to the FliT family. In terms of assembly, homodimer. Interacts with FliD and FlhC.

It is found in the cytoplasm. The protein localises to the cytosol. Dual-function protein that regulates the transcription of class 2 flagellar operons and that also acts as an export chaperone for the filament-capping protein FliD. As a transcriptional regulator, acts as an anti-FlhDC factor; it directly binds FlhC, thus inhibiting the binding of the FlhC/FlhD complex to class 2 promoters, resulting in decreased expression of class 2 flagellar operons. As a chaperone, effects FliD transition to the membrane by preventing its premature polymerization, and by directing it to the export apparatus. The sequence is that of Flagellar protein FliT from Escherichia coli O9:H4 (strain HS).